The following is a 204-amino-acid chain: Intraflagellar transport protein 27 (204 aa).

GTP is bound by residues 23 to 30, 75 to 79, and 136 to 139; these read GEATVGKS, DTAGS, and NKTD.

The protein belongs to the small GTPase superfamily. Rab family. As to quaternary structure, component of the IFT complex B, the core composed of IFT25, IFT27, IFT46, IFT52, IFT74, IFT81 and IFT88 as well as associated subunits IFT20, IFT57, IFT80 and IFT172. Interacts with IFT25; the interaction is direct.

It localises to the cell projection. The protein localises to the cilium. It is found in the flagellum. The protein resides in the cytoplasm. Its subcellular location is the cytoskeleton. It localises to the flagellum basal body. Small GTPase-like component of the intraflagellar transport (IFT) complex B. Forms a subcomplex within the IFT complex B with IFT25. Has very low GTPase activity either because it lacks the conserved catalytic Gln in position 79 or because it requires some GTPase-activating protein (GAP) for GTP turnover. This chain is Intraflagellar transport protein 27 (IFT27), found in Chlamydomonas reinhardtii (Chlamydomonas smithii).